The chain runs to 224 residues: Ribosome maturation factor RimP (224 aa).

Residues 194–224 form a disordered region; the sequence is REGRIPGDDLGSEEAGEQSDETASGEAEDKE. The span at 203-213 shows a compositional bias: acidic residues; it reads LGSEEAGEQSD.

Belongs to the RimP family.

Its subcellular location is the cytoplasm. In terms of biological role, required for maturation of 30S ribosomal subunits. The protein is Ribosome maturation factor RimP of Brucella anthropi (strain ATCC 49188 / DSM 6882 / CCUG 24695 / JCM 21032 / LMG 3331 / NBRC 15819 / NCTC 12168 / Alc 37) (Ochrobactrum anthropi).